Reading from the N-terminus, the 349-residue chain is Alcohol dehydrogenase 1 (349 aa).

Residues C46, H69, C100, C103, C106, C114, and C156 each contribute to the Zn(2+) site. Residues 180 to 186 (GAGGGLG), D204, K208, 270 to 272 (VGL), and R342 contribute to the NAD(+) site.

The protein belongs to the zinc-containing alcohol dehydrogenase family. As to quaternary structure, homotetramer. The cofactor is Zn(2+).

The enzyme catalyses a primary alcohol + NAD(+) = an aldehyde + NADH + H(+). It catalyses the reaction a secondary alcohol + NAD(+) = a ketone + NADH + H(+). In Caenorhabditis elegans, this protein is Alcohol dehydrogenase 1.